A 176-amino-acid chain; its full sequence is Sigma intracellular receptor 2 (176 aa).

Residues 1-9 (MGALAARRC) lie on the Cytoplasmic side of the membrane. A helical membrane pass occupies residues 10 to 30 (VEWLLGLYFVSHIPITLFIDL). The region spanning 10 to 158 (VEWLLGLYFV…PYLIIPLILL (149 aa)) is the EXPERA domain. Over 31–68 (QAVLPPELYPQEFSNLLRWYSKEFKDPLMQEPPVWFKS) the chain is Lumenal. Residues 69–89 (FLLCELVFQLPFFPIAAYAFF) form a helical membrane-spanning segment. V75 and Q77 together coordinate cholesterol. Over 90–99 (KGSCRWIRIP) the chain is Cytoplasmic. The helical transmembrane segment at 100-120 (AIIYAAHTITTLIPILYTLLF) threads the bilayer. At 121 to 140 (EDFSKAVAFKGQRPESFRER) the chain is on the lumenal side. The chain crosses the membrane as a helical span at residues 141–161 (LTLVGVYAPYLIIPLILLLFM). At 162–176 (LRNPYYKYEEKRKKK) the chain is on the cytoplasmic side. An ER retention motif motif is present at residues 172 to 176 (KRKKK).

It belongs to the TMEM97/sigma-2 receptor family. As to quaternary structure, homodimer. Interacts with NPC1; the interaction impairs NPC1-mediated cholesterol transport. Interacts with PGRMC1 and LDLR; the interaction increases LDL internalization. Interacts with histatin 1/HTN1; the interaction induces HTN1-stimulating wound healing. Interacts with TSPO.

It is found in the rough endoplasmic reticulum membrane. It localises to the nucleus membrane. Sigma-2 receptor which contributes to ameliorate dysfunctional cellular processes and slow degenerative progression by regulating cell functions including cholesterol biosynthesis/trafficking, membrane trafficking, autophagy, lipid membrane-bound protein trafficking, and receptor stabilization at the cell surface. Forms a ternary complex with PGRMC1 receptor and low density lipoprotein receptor/LDLR at the plasma membrane, which increases LDLR-mediated LDL cholesterol internalization. Decreases lysosomal sterol transporter NPC1 availability to the cell, probably through NPC1-binding, hence controlling lipid transport, including cholesterol and LBPA, outside of late endosome/lysosome. Binds regio- and stereoselective ligand 20(S)-hydroxycholesterol (20(S)-OHC) which enhances TMEM97-NPC1 interaction and decreases TMEM97-PGRMC1 and TMEM97-TSPO interactions, thereby linking OHC binding to cholesterol homeostasis. Also able to bind cholesterol. Binds histatin 1 (Hst 1)/HN1 salivary peptide at the ER membrane, which is critical for increasing mitochondria-ER contacts and stimulating Hst1 wound healing properties. May alter the activity of some cytochrome P450 proteins. Although shows homologies with sterol isomerases (EXPERA domain), not able to catalyze sterol isomerization. However, may act as sensors of these molecules. Acts as a quality control factor in the ER, promoting the proteolytic degradation of nonproductive and extramitochondrial precursor proteins in the ER membrane thus removing them from the ER surface. The polypeptide is Sigma intracellular receptor 2 (Mus musculus (Mouse)).